We begin with the raw amino-acid sequence, 161 residues long: Type II secretion system protein M (161 aa).

Residues Met1 to Arg16 are Cytoplasmic-facing. A helical membrane pass occupies residues Cys17 to Trp36. The Periplasmic segment spans residues Gln37–Lys161.

This sequence belongs to the GSP M family. As to quaternary structure, type II secretion system is composed of four main components: the outer membrane complex, the inner membrane complex, the cytoplasmic secretion ATPase and the periplasm-spanning pseudopilus. Forms homodimers. Interacts with PulL/GspL. Interacts with PulE/GspE and PulF/GspF.

The protein resides in the cell inner membrane. Its function is as follows. Inner membrane component of the type II secretion system required for the energy-dependent secretion of extracellular factors such as proteases and toxins from the periplasm. Plays a role in the complex assembly and recruits PulL resulting in a stable complex in the inner membrane. Provides thus a link between the energy-providing PulE protein in the cytoplasm and the rest of the T2SS machinery. The polypeptide is Type II secretion system protein M (pulM) (Klebsiella pneumoniae).